The sequence spans 546 residues: Acyl-CoA ligase oryP (546 aa).

ATP-binding positions include 166–174 (TSGTTGAPK), 300–305 (QFWLNL), and Arg-403. Residues 412-414 (WDH) and 482-484 (LLR) each bind CoA. Lys-499 is an ATP binding site.

Belongs to the ATP-dependent AMP-binding enzyme family.

The protein operates within secondary metabolite biosynthesis. Its function is as follows. Acyl-CoA ligase; part of the gene cluster that mediates the biosynthesis of oryzines, natural products with an unusual maleidride backbone. The two subunits of the fungal fatty acid synthase oryfasA and oryfasB probably form octenoic acid. This fatty acid is most likely activated by the acyl-CoA ligase oryP to give octenyl-CoA before the citrate synthase-like protein oryE catalyzes condensation with oxaloacetate to form tricarboxylic acid. The next steps of the pathways are conjectural, but a favorite possible route has been proposed, beginning with decarboxylation and concomitant dehydration by the decarboxylase oryM, followed by tautomerization, which may lead to the production of a diene intermediate. Reduction of this diene intermediate could give the known metabolite piliformic acid. On the pathway to oryzine B and oryzine A, however, hydroxylation of the diene by the alpha-ketoglutarate-dependent dioxygenase oryG and lactonisation by the lactonohydrolases oryH or oryL could give oryzine B directly. Finally, enoyl reduction by the dehydrogenase oryD would then convert oryzine B into oryzine A. The polypeptide is Acyl-CoA ligase oryP (Aspergillus oryzae (strain ATCC 42149 / RIB 40) (Yellow koji mold)).